Consider the following 217-residue polypeptide: Membrane-spanning 4-domains subfamily A member 6C (217 aa).

Positions 1-20 are enriched in polar residues; it reads MIPQVVTNETITTISPNGIN. The segment at 1–33 is disordered; that stretch reads MIPQVVTNETITTISPNGINFPQKDESQPTQQR. Topologically, residues 1 to 46 are cytoplasmic; that stretch reads MIPQVVTNETITTISPNGINFPQKDESQPTQQRQDSLKKHLKAEIK. A helical membrane pass occupies residues 47–67; that stretch reads VIVAIQIMCAVTVLALGIILA. Residues 68 to 84 lie on the Extracellular side of the membrane; the sequence is SVPPVPYFNSVFSVLLK. A helical transmembrane segment spans residues 85–105; it reads SGYPFIGALFFIASGILSIIT. At 106 to 121 the chain is on the cytoplasmic side; it reads ERKSTKPLVDASLTLN. A helical membrane pass occupies residues 122 to 142; sequence ILSVSFAFVGIIIISVSLAGL. At 143–186 the chain is on the extracellular side; that stretch reads HPASEQCKQSKELSLIEHDYYQPFYNSDRSECAVTKSILTGALS. Residues 187 to 207 form a helical membrane-spanning segment; that stretch reads VMLIISVLELGLALLSAMLWL. Over 208–217 the chain is Cytoplasmic; sequence REGVLTSLRM.

The protein belongs to the MS4A family. As to expression, expressed only by thymus, spleen, peripheral lymph node and bone marrow.

It is found in the membrane. In terms of biological role, may be involved in signal transduction as a component of a multimeric receptor complex. The protein is Membrane-spanning 4-domains subfamily A member 6C (Ms4a6c) of Mus musculus (Mouse).